The primary structure comprises 318 residues: 2-keto-3-deoxygluconate permease (318 aa).

Transmembrane regions (helical) follow at residues 10–30 (LPGG…TLWP), 42–62 (GLIS…GATI), 82–102 (IAMA…GGVP), 109–129 (LSVL…YAAL), 139–159 (AGAV…LILG), 163–183 (LASF…LGFA), 194–214 (FFAQ…GNTL), 224–244 (ASGV…LLLA), 257–277 (VAAS…AGMA), and 289–309 (ALVA…TALY).

This sequence belongs to the KdgT transporter family.

It localises to the cell inner membrane. The catalysed reaction is 2-dehydro-3-deoxy-D-gluconate(in) + H(+)(in) = 2-dehydro-3-deoxy-D-gluconate(out) + H(+)(out). Functionally, catalyzes the proton-dependent uptake of 2-keto-3-deoxygluconate (KDG) into the cell. The protein is 2-keto-3-deoxygluconate permease of Xanthomonas euvesicatoria pv. vesicatoria (strain 85-10) (Xanthomonas campestris pv. vesicatoria).